A 485-amino-acid polypeptide reads, in one-letter code: Pumilio domain-containing protein 7 (485 aa).

The tract at residues 29–72 (NKTHKNKNPKPPVKLLPYRHGSNTTSSDSDSYIFNSGSGSSDAE) is disordered. The span at 49 to 71 (GSNTTSSDSDSYIFNSGSGSSDA) shows a compositional bias: polar residues. Pumilio repeat units lie at residues 86–124 (DVLL…AVFE), 128–163 (ESTT…ELLR), 164–200 (QMID…QLIQ), 201–236 (ELST…TFFV), 237–279 (HFLS…FRIQ), 287–324 (CIVR…TIID), 326–361 (CLLR…EMME), and 370–411 (DVES…RELP). Residues 439–454 (FSSGKKIIDSVMRHGV) form an RNA-binding region.

RNA-binding protein that binds to the consensus sequence 5'-CUCUGUAUCUUGU-3' in mRNA 3'-UTRs and modulates mRNA expression and stability. Functions redundantly with puf-5 and puf-6 in oocyte formation and organization, early embryonic cell divisions, and repression of expression of glp-1 and other maternal mRNAs in late oogenesis. The polypeptide is Pumilio domain-containing protein 7 (Caenorhabditis elegans).